The chain runs to 90 residues: Acylphosphatase (90 aa).

Positions 3-90 constitute an Acylphosphatase-like domain; it reads RVLIKLTGKV…DIYLDFSIVR (88 aa). Residues R18 and N36 contribute to the active site.

It belongs to the acylphosphatase family.

The enzyme catalyses an acyl phosphate + H2O = a carboxylate + phosphate + H(+). This Shewanella oneidensis (strain ATCC 700550 / JCM 31522 / CIP 106686 / LMG 19005 / NCIMB 14063 / MR-1) protein is Acylphosphatase (acyP).